The following is a 227-amino-acid chain: MAERSNSEEVKLLGMWASPFSRRIEIALTLKGVSYEFLEQDITNKSSLLLQLNPVHKMIPVLVHNGKPISESLVILEYIDETWRDNPILPQDPYERTMARFWSKFVDEQIYVTAMKVVGKTGKERDAVVEATRDLLMFLEKELVGKDFLGGKSLGFVDIVATLVAFWLMRTEEIVGVKVVPVEKFPEIHRWVKNLLGNDVIKKCIPPEDEHLKYIRARMEKLNIKSA.

The region spanning E8–P87 is the GST N-terminal domain. Residues S18–P19, N44–K45, M58–I59, and E71–S72 contribute to the glutathione site. Residues D92 to I215 form the GST C-terminal domain.

The protein belongs to the GST superfamily. Tau family.

It is found in the cytoplasm. The protein resides in the cytosol. It catalyses the reaction RX + glutathione = an S-substituted glutathione + a halide anion + H(+). Functionally, may be involved in the conjugation of reduced glutathione to a wide number of exogenous and endogenous hydrophobic electrophiles and have a detoxification role against certain herbicides. This Arabidopsis thaliana (Mouse-ear cress) protein is Glutathione S-transferase U7 (GSTU7).